Here is a 121-residue protein sequence, read N- to C-terminus: Large ribosomal subunit protein bL12 (121 aa).

Belongs to the bacterial ribosomal protein bL12 family. Homodimer. Part of the ribosomal stalk of the 50S ribosomal subunit. Forms a multimeric L10(L12)X complex, where L10 forms an elongated spine to which 2 to 4 L12 dimers bind in a sequential fashion. Binds GTP-bound translation factors.

Its function is as follows. Forms part of the ribosomal stalk which helps the ribosome interact with GTP-bound translation factors. Is thus essential for accurate translation. The chain is Large ribosomal subunit protein bL12 from Shewanella frigidimarina (strain NCIMB 400).